A 202-amino-acid chain; its full sequence is Ribosome maturation factor RimP (202 aa).

Belongs to the RimP family.

The protein resides in the cytoplasm. Functionally, required for maturation of 30S ribosomal subunits. The protein is Ribosome maturation factor RimP of Polaromonas naphthalenivorans (strain CJ2).